Here is a 526-residue protein sequence, read N- to C-terminus: Opine oxidase subunit A (526 aa).

4 residues coordinate [2Fe-2S] cluster: C396, C398, C431, and C436.

It to T-protein and to dimethylglycine dehydrogenase. As to quaternary structure, heterodimer of a subunit A and a subunit B. Requires [2Fe-2S] cluster as cofactor.

Its pathway is opine metabolism; octopine degradation. Functionally, oxidative cleavage of octopine into L-arginine and pyruvate. The protein is Opine oxidase subunit A (ooxA) of Rhizobium meliloti (Ensifer meliloti).